A 338-amino-acid chain; its full sequence is RNA 3'-terminal phosphate cyclase (338 aa).

ATP-binding positions include glutamine 103 and 283–287; that span reads YLADQ. The Tele-AMP-histidine intermediate role is filled by histidine 308.

The protein belongs to the RNA 3'-terminal cyclase family. Type 1 subfamily.

It localises to the cytoplasm. It catalyses the reaction a 3'-end 3'-phospho-ribonucleotide-RNA + ATP = a 3'-end 2',3'-cyclophospho-ribonucleotide-RNA + AMP + diphosphate. Functionally, catalyzes the conversion of 3'-phosphate to a 2',3'-cyclic phosphodiester at the end of RNA. The mechanism of action of the enzyme occurs in 3 steps: (A) adenylation of the enzyme by ATP; (B) transfer of adenylate to an RNA-N3'P to produce RNA-N3'PP5'A; (C) and attack of the adjacent 2'-hydroxyl on the 3'-phosphorus in the diester linkage to produce the cyclic end product. The biological role of this enzyme is unknown but it is likely to function in some aspects of cellular RNA processing. This Escherichia coli O17:K52:H18 (strain UMN026 / ExPEC) protein is RNA 3'-terminal phosphate cyclase.